Consider the following 224-residue polypeptide: Flagellar L-ring protein (224 aa).

A signal peptide spans 1-15 (MRSLLFSLTALVLAG). Cysteine 16 carries the N-palmitoyl cysteine lipid modification. Cysteine 16 is lipidated: S-diacylglycerol cysteine.

It belongs to the FlgH family. As to quaternary structure, the basal body constitutes a major portion of the flagellar organelle and consists of four rings (L,P,S, and M) mounted on a central rod.

The protein resides in the cell outer membrane. The protein localises to the bacterial flagellum basal body. In terms of biological role, assembles around the rod to form the L-ring and probably protects the motor/basal body from shearing forces during rotation. In Idiomarina loihiensis (strain ATCC BAA-735 / DSM 15497 / L2-TR), this protein is Flagellar L-ring protein.